Here is an 89-residue protein sequence, read N- to C-terminus: Small ribosomal subunit protein uS14A (89 aa).

Belongs to the universal ribosomal protein uS14 family. In terms of assembly, part of the 30S ribosomal subunit. Contacts proteins S3 and S10.

In terms of biological role, binds 16S rRNA, required for the assembly of 30S particles and may also be responsible for determining the conformation of the 16S rRNA at the A site. The protein is Small ribosomal subunit protein uS14A of Staphylococcus saprophyticus subsp. saprophyticus (strain ATCC 15305 / DSM 20229 / NCIMB 8711 / NCTC 7292 / S-41).